Consider the following 797-residue polypeptide: MKRTSNRNEEATAKLSSSTTITTTTTNKYYNMANAEKSSKSTTISNLIPKYSLFNEPNNDNDTNSSTRPNKQQKLLKSNESTTSTTTTTTPITTTTTTTTTTTTPNLSKYYNYNLYIEKQNEKQNLPTTETETTTITPTLTTTTTTTTTTTTTTTKQIQNTTTSTINHFLPLIIQKEIIFLLVELGSFLNARKVCKYWKKVCNGCVENLNIYFTDIHLSASVKHVSEVFVKSLNSDYFHLQSVSFINGAKNSISYSEFYFNNVILPFIENVVRYNQTIENFTIKGFPITRINNKSSQQLLPSYKLYHSTSVPSSPPPPPPPPPPQIQQPTITAPTSTTAIAVSSTTTTATGQTLNNNNNNNNIPKGLNYYLTNNFKLKKINLKNIGLDSRDKFDFFSSLSSSVNNTLETLIICDNIGDEGMQLLSVILIKNLLKVLKRLELQKNQFTNQSAYYLNKVLSCEQLQLETLNLSSNRIDEQGLIMMKDGFGRNKSLKEFIFSKNRLGNTDSVDFGKSITSLDLHDSMVGSKQSIKGLSQYLKFNESITSLNLSFNHIGSNEAIKSLSKSFAVNQTLKFVDLSFNKINSNFGLDHLVSSLLINHSIHSISLQSNQIDNTSAITLSQLFNSSRQLFSPFKYLNLSGNKIGIGGLKKLINDLSKYSKTHIIYNNNDDNNNNKNENENKSKIKNLSFNNNNNNFVKIIKNYHDTIPIIRTINNSNGKNLLEEEVEQVINSSSNDTNQNDNINNENNLTEISIDLSSNSPLEVSKVIGLIPRYKSKLTFADRKPVKKYKLVKLLF.

A compositionally biased stretch (basic and acidic residues) spans 1-12; the sequence is MKRTSNRNEEAT. Disordered stretches follow at residues 1–20, 51–103, 125–148, and 307–333; these read MKRT…SSTT, YSLF…TTTT, NLPT…TTTT, and HSTS…TITA. A compositionally biased stretch (polar residues) spans 55-81; sequence NEPNNDNDTNSSTRPNKQQKLLKSNES. A compositionally biased stretch (low complexity) spans 82 to 103; that stretch reads TTSTTTTTTPITTTTTTTTTTT. A compositionally biased stretch (pro residues) spans 313-326; that stretch reads SSPPPPPPPPPPQI. LRR repeat units follow at residues 376 to 397, 406 to 425, 435 to 456, 464 to 484, 492 to 513, 514 to 535, 543 to 564, 572 to 593, 601 to 622, and 633 to 653; these read KLKK…DFFS, TLET…QLLS, VLKR…YLNK, QLET…IMMK, SLKE…DFGK, SITS…KGLS, SITS…KSLS, TLKF…DHLV, SIHS…TLSQ, and PFKY…KKLI.

The protein is Leucine-rich repeat-containing protein AAC1 (AAC1) of Dictyostelium discoideum (Social amoeba).